Reading from the N-terminus, the 81-residue chain is Small ribosomal subunit protein bS18 (81 aa).

This sequence belongs to the bacterial ribosomal protein bS18 family. As to quaternary structure, part of the 30S ribosomal subunit. Forms a tight heterodimer with protein bS6.

In terms of biological role, binds as a heterodimer with protein bS6 to the central domain of the 16S rRNA, where it helps stabilize the platform of the 30S subunit. The sequence is that of Small ribosomal subunit protein bS18 from Lactococcus lactis subsp. cremoris (strain MG1363).